A 116-amino-acid polypeptide reads, in one-letter code: Iron-sulfur cluster insertion protein ErpA (116 aa).

Residues cysteine 44, cysteine 108, and cysteine 110 each coordinate iron-sulfur cluster.

Belongs to the HesB/IscA family. As to quaternary structure, homodimer. Iron-sulfur cluster serves as cofactor.

Its function is as follows. Required for insertion of 4Fe-4S clusters for at least IspG. This chain is Iron-sulfur cluster insertion protein ErpA, found in Aeromonas hydrophila subsp. hydrophila (strain ATCC 7966 / DSM 30187 / BCRC 13018 / CCUG 14551 / JCM 1027 / KCTC 2358 / NCIMB 9240 / NCTC 8049).